Here is a 383-residue protein sequence, read N- to C-terminus: G-protein coupled receptor E1 (383 aa).

A run of 9 helical transmembrane segments spans residues 13 to 35, 78 to 98, 109 to 129, 160 to 180, 190 to 210, 242 to 262, 279 to 299, 323 to 343, and 351 to 371; these read SSLA…TTIA, LYLL…IIVI, MLLL…PFWM, VFCI…AVTA, IVTC…EFFF, VIML…YVII, LIFV…IVLL, LITK…YAFV, and LYHF…PFLS. C145 and C222 are oxidised to a cystine.

It belongs to the G-protein coupled receptor 1 family.

The protein localises to the host membrane. The sequence is that of G-protein coupled receptor E1 (E1) from Equine herpesvirus 2 (strain 86/87) (EHV-2).